The primary structure comprises 98 residues: Feather keratin (98 aa).

Position 1 is an N-acetylalanine (A1).

This sequence belongs to the avian keratin family. The avian keratins (F-ker, S-ker, C-ker and B-ker) are a complex mixture of very similar polypeptides.

The sequence is that of Feather keratin from Chroicocephalus novaehollandiae (Silver gull).